The primary structure comprises 254 residues: L-arabinose 1-dehydrogenase (NAD(P)(+)) (254 aa).

The Proton acceptor role is filled by tyrosine 142. 2 residues coordinate NAD(+): tyrosine 142 and lysine 146.

Belongs to the NAD(P)-dependent epimerase/dehydratase family. Homotetramer.

The catalysed reaction is alpha-L-arabinopyanose + NAD(+) = L-arabinono-1,4-lactone + NADH + H(+). It carries out the reaction alpha-L-arabinopyanose + NADP(+) = L-arabinono-1,4-lactone + NADPH + H(+). Its pathway is carbohydrate degradation; L-arabinose degradation via L-arabinono-1,4-lactone pathway. In terms of biological role, L-AraDH initiates the degradation of L-arabinose. Catalyzes the NAD(P)(+)-dependent conversion of L-arabinose to L-arabino-gamma-lactone. It is highly specific for L-arabinose as substrate and can use both NADP(+) and NAD(+) as electron acceptor, with a slight preference for NADP(+). This chain is L-arabinose 1-dehydrogenase (NAD(P)(+)), found in Haloferax volcanii (strain ATCC 29605 / DSM 3757 / JCM 8879 / NBRC 14742 / NCIMB 2012 / VKM B-1768 / DS2) (Halobacterium volcanii).